Consider the following 393-residue polypeptide: Isocitrate dehydrogenase [NAD] subunit gamma, mitochondrial (393 aa).

Residues 1 to 39 (MALKVATVAGSAAKAVLGPALLCRPWEVLGAHEVPSRNI) constitute a mitochondrion transit peptide. Positions 120 and 133 each coordinate citrate. The substrate site is built by arginine 136, arginine 167, and aspartate 254. Aspartate 254 contributes to the Mn(2+) binding site. 3 residues coordinate ADP: asparagine 312, threonine 313, and asparagine 324.

Belongs to the isocitrate and isopropylmalate dehydrogenases family. As to quaternary structure, heterooligomer of subunits alpha (IDH3A), beta (IDH3B), and gamma (IDH3G) in the apparent ratio of 2:1:1. The heterodimer containing one IDH3A and one IDH3B subunit and the heterodimer containing one IDH3A and one IDH3G subunit assemble into a heterotetramer (which contains two subunits of IDH3A, one of IDH3B and one of IDH3G) and further into the heterooctamer. It depends on Mg(2+) as a cofactor. Requires Mn(2+) as cofactor.

It localises to the mitochondrion. The heterotetramer and the heterodimer composed of IDH3A and IDH3G subunits can be allosterically activated by citrate (CIT) or/and ADP, and the two activators can act independently or synergistically. The heterodimer composed of IDH3A and IDH3B subunits cannot be allosterically regulated and the allosteric regulation of the heterotetramer is through the IDH3G subunit and not the IDH3B subunit. The IDH3G subunit contains the allosteric site which consists of a CIT-binding site and an ADP-binding site, and the binding of CIT and ADP causes conformational changes at the allosteric site which are transmitted to the active site in the catalytic subunit (IDH3A) through a cascade of conformational changes at the heterodimer interface, leading to stabilization of the isocitrate-binding at the active site and thus activation of the enzyme. ATP can activate the heterotetramer and the heterodimer composed of IDH3A and IDH3G subunits at low concentrations but inhibits their activities at high concentrations, whereas ATP exhibits only inhibitory effect on the heterodimer composed of IDH3A and IDH3B subunits. In terms of biological role, regulatory subunit which plays a role in the allosteric regulation of the enzyme catalyzing the decarboxylation of isocitrate (ICT) into alpha-ketoglutarate. The heterodimer composed of the alpha (IDH3A) and beta (IDH3B) subunits and the heterodimer composed of the alpha (IDH3A) and gamma (IDH3G) subunits, have considerable basal activity but the full activity of the heterotetramer (containing two subunits of IDH3A, one of IDH3B and one of IDH3G) requires the assembly and cooperative function of both heterodimers. The sequence is that of Isocitrate dehydrogenase [NAD] subunit gamma, mitochondrial (IDH3G) from Homo sapiens (Human).